The sequence spans 420 residues: Protein disulfide isomerase CRELD1 (420 aa).

The first 29 residues, 1 to 29 (MAPWPPKGLVPAMLWGLSLFLNLPGPIWL), serve as a signal peptide directing secretion. Residues 30 to 362 (QPSPPPQSSP…GFFSEMTEDE (333 aa)) lie on the Extracellular side of the membrane. The short motif at 46–49 (CHTC) is the CXXC element. Cys46 and Cys49 are oxidised to a cystine. Asn79 carries N-linked (GlcNAc...) asparagine glycosylation. The EGF-like 1 domain maps to 153–193 (LPCPGGTERPCGGYGQCEGEGTRGGSGHCDCQAGYGGEACG). Disulfide bonds link Cys155–Cys169, Cys163–Cys181, and Cys183–Cys192. A glycan (N-linked (GlcNAc...) asparagine) is linked at Asn205. FU repeat units follow at residues 208-256 (HLVC…GANC) and 268-315 (SYEC…EVCP). Positions 278-281 (CLGC) match the CXXC motif. 4 disulfide bridges follow: Cys278–Cys281, Cys309–Cys321, Cys314–Cys330, and Cys332–Cys343. Residues 305–344 (DVDECETEVCPGENKQCENTEGGYRCICAEGYKQMEGICV) enclose the EGF-like 2; calcium-binding domain. A helical membrane pass occupies residues 363 to 383 (LVVLQQMFFGIIICALATLAA). Lys384 is a topological domain (cytoplasmic). Residues 385-405 (GDLVFTAIFIGAVAAMTGYWL) form a helical membrane-spanning segment. At 406-420 (SERSDRVLEGFIKGR) the chain is on the extracellular side.

Belongs to the CRELD family. Highly expressed in fetal lung, liver, kidney, adult heart, brain and skeletal muscle. Weakly expressed in placenta, fetal brain, and adult lung, liver, kidney and pancreas.

It is found in the membrane. It carries out the reaction Catalyzes the rearrangement of -S-S- bonds in proteins.. Protein disulfide isomerase. Promotes the localization of acetylcholine receptors (AChRs) to the plasma membrane. This chain is Protein disulfide isomerase CRELD1 (CRELD1), found in Homo sapiens (Human).